A 107-amino-acid chain; its full sequence is uncharacterized protein (107 aa).

Positions 23–64 (SASSSSSTRIPSGFASATSSKSNSSTKSSPSPINSFNNKTNN) are disordered. Positions 37–57 (ASATSSKSNSSTKSSPSPINS) are enriched in low complexity. Residues 76–98 (LAFGIVEFMVFNGMISTITTTTF) traverse the membrane as a helical segment.

The protein localises to the membrane. This is an uncharacterized protein from Dictyostelium discoideum (Social amoeba).